The primary structure comprises 396 residues: DNA polymerase IV (396 aa).

The region spanning 2–182 (ILHVDMDAFY…LPVSRLWGVG (181 aa)) is the UmuC domain. The Mg(2+) site is built by Asp6 and Asp100. Glu101 is a catalytic residue.

It belongs to the DNA polymerase type-Y family. Monomer. Mg(2+) is required as a cofactor.

The protein resides in the cytoplasm. It catalyses the reaction DNA(n) + a 2'-deoxyribonucleoside 5'-triphosphate = DNA(n+1) + diphosphate. Functionally, poorly processive, error-prone DNA polymerase involved in untargeted mutagenesis. Copies undamaged DNA at stalled replication forks, which arise in vivo from mismatched or misaligned primer ends. These misaligned primers can be extended by PolIV. Exhibits no 3'-5' exonuclease (proofreading) activity. May be involved in translesional synthesis, in conjunction with the beta clamp from PolIII. The polypeptide is DNA polymerase IV (Rhodopirellula baltica (strain DSM 10527 / NCIMB 13988 / SH1)).